Reading from the N-terminus, the 184-residue chain is Large ribosomal subunit protein bL9 (184 aa).

Residues 160 to 184 (LQNQKSEQQEAEQDANKEATDGDDS) are disordered. A compositionally biased stretch (basic and acidic residues) spans 173–184 (DANKEATDGDDS).

It belongs to the bacterial ribosomal protein bL9 family.

Binds to the 23S rRNA. In Wolbachia pipientis wMel, this protein is Large ribosomal subunit protein bL9.